The primary structure comprises 1302 residues: Zinc finger protein 536 (1302 aa).

Residues 1–26 form a disordered region; sequence MEEASLCLGVSSTAPEAEPHLSGPVL. 7 consecutive C2H2-type zinc fingers follow at residues 130–152, 158–180, 274–297, 300–323, 345–367, 373–395, and 631–653; these read YPCP…MRTH, FKCP…LRTH, FRCT…RILH, YKCT…EKAH, FRCE…MRKH, HCCQ…MKVH, and TECP…SRVH. Residues 650 to 736 are disordered; that stretch reads SRVHKRDRKS…IGEEAGRAGG (87 aa). Positions 657 to 676 are enriched in basic and acidic residues; sequence RKSDEDALHVGVGLEERRGS. The span at 677–698 shows a compositional bias: polar residues; that stretch reads GSDQESQSVSRSTTPGSSNVTE. 2 C2H2-type zinc fingers span residues 753–775 and 781–803; these read KDCP…LRIH and YKCP…LERH. Disordered regions lie at residues 804–832, 855–897, 935–988, and 1133–1261; these read HRER…SKAP, GPAS…SKSS, KDTK…APTL, and NKNT…GLEK. Ser828 and Ser829 each carry phosphoserine. The span at 869 to 883 shows a compositional bias: polar residues; sequence GDHSGQATGMPSELS. A compositionally biased stretch (basic and acidic residues) spans 935–973; sequence KDTKDKVPSDAHPMKAHTAEGGEEKASMKPSQRKSEKSQ. Composition is skewed to acidic residues over residues 1161-1171 and 1179-1188; these read DLSDIASSEDM and NEDEELDTEP. Residues 1198–1212 are compositionally biased toward low complexity; sequence LSKDGSSEGGDSLLS.

The protein belongs to the krueppel C2H2-type zinc-finger protein family. Expressed predominantly in the brain, while a weak signal is also detected in the heart and testis. Expression is abundant in neuronal cells of the cerebral cortex, hippocampus and hypothalamic area (at protein level).

It localises to the nucleus. Its function is as follows. Transcriptional repressor that negatively regulates neuron differentiation by repressing retinoic acid-induced gene transcription. Binds and interrupts RARA from binding to retinoic acid response elements (RARE) composed of tandem 5'-AGGTCA-3' sites known as DR1-DR5. Recognizes and binds 2 copies of the core DNA sequence 5'-CCCCCA-3'. This chain is Zinc finger protein 536 (Znf536), found in Mus musculus (Mouse).